The sequence spans 64 residues: Potassium channel toxin kappa-KTx 3.1 (64 aa).

The N-terminal stretch at 1–26 is a signal peptide; that stretch reads MKSTLMTASVLILVLLSIVDYASVYA. Residues 27-36 constitute a propeptide that is removed on maturation; the sequence is EFIDSEISLE. 2 cysteine pairs are disulfide-bonded: C43–C61 and C47–C57.

This sequence belongs to the short scorpion toxin superfamily. Potassium channel inhibitor kappa-KTx family. Kappa-KTx 3 subfamily. As to expression, expressed by the venom gland.

The protein resides in the secreted. In terms of biological role, potassium channel inhibitor (Kv). This chain is Potassium channel toxin kappa-KTx 3.1, found in Heterometrus petersii (Asian forest scorpion).